A 415-amino-acid chain; its full sequence is D-galactonate dehydratase family member RspA (415 aa).

Substrate-binding residues include Asn48 and His133. Residue Tyr170 is the Proton donor/acceptor of the active site. Residue Asp223 coordinates Mg(2+). The active-site Proton donor/acceptor is the His225. Residues Glu249, Asp250, and Glu275 each coordinate Mg(2+). Substrate contacts are provided by Glu275, Arg296, His325, Asp329, and Glu352.

The protein belongs to the mandelate racemase/muconate lactonizing enzyme family. GalD subfamily. Requires Mg(2+) as cofactor.

It carries out the reaction D-mannonate = 2-dehydro-3-deoxy-D-gluconate + H2O. Functionally, has low D-mannonate dehydratase activity (in vitro), suggesting that this is not a physiological substrate and that it has no significant role in D-mannonate degradation in vivo. Has no detectable activity with a panel of 70 other acid sugars (in vitro). This is D-galactonate dehydratase family member RspA (rspA) from Escherichia coli O6:H1 (strain CFT073 / ATCC 700928 / UPEC).